The primary structure comprises 351 residues: Probable protein phosphatase 2C 8 (351 aa).

Residues Met1 to Phe63 form a disordered region. A compositionally biased stretch (basic and acidic residues) spans Arg54–Phe63. One can recognise a PPM-type phosphatase domain in the interval Glu74–Phe348. Residues Asp114, Gly115, Asp295, and Asp339 each contribute to the Mn(2+) site.

The protein belongs to the PP2C family. Mg(2+) is required as a cofactor. The cofactor is Mn(2+).

The enzyme catalyses O-phospho-L-seryl-[protein] + H2O = L-seryl-[protein] + phosphate. It catalyses the reaction O-phospho-L-threonyl-[protein] + H2O = L-threonyl-[protein] + phosphate. The chain is Probable protein phosphatase 2C 8 from Arabidopsis thaliana (Mouse-ear cress).